The sequence spans 336 residues: Ribosomal RNA small subunit methyltransferase C (336 aa).

The protein belongs to the methyltransferase superfamily. RsmC family. As to quaternary structure, monomer.

The protein resides in the cytoplasm. It carries out the reaction guanosine(1207) in 16S rRNA + S-adenosyl-L-methionine = N(2)-methylguanosine(1207) in 16S rRNA + S-adenosyl-L-homocysteine + H(+). In terms of biological role, specifically methylates the guanine in position 1207 of 16S rRNA in the 30S particle. This is Ribosomal RNA small subunit methyltransferase C from Hamiltonella defensa subsp. Acyrthosiphon pisum (strain 5AT).